The sequence spans 405 residues: Diaminopimelate decarboxylase (405 aa).

The residue at position 46 (Lys46) is an N6-(pyridoxal phosphate)lysine. Pyridoxal 5'-phosphate contacts are provided by residues Gly225 and 259-262 (EPGR). Arg262, Arg298, and Tyr302 together coordinate substrate. Residue Cys329 is the Proton donor of the active site. Substrate-binding residues include Glu330 and Tyr358. Tyr358 is a pyridoxal 5'-phosphate binding site.

It belongs to the Orn/Lys/Arg decarboxylase class-II family. LysA subfamily. As to quaternary structure, homodimer. It depends on pyridoxal 5'-phosphate as a cofactor.

The catalysed reaction is meso-2,6-diaminopimelate + H(+) = L-lysine + CO2. It participates in amino-acid biosynthesis; L-lysine biosynthesis via DAP pathway; L-lysine from DL-2,6-diaminopimelate: step 1/1. In terms of biological role, specifically catalyzes the decarboxylation of meso-diaminopimelate (meso-DAP) to L-lysine. The chain is Diaminopimelate decarboxylase from Helicobacter pylori (strain ATCC 700392 / 26695) (Campylobacter pylori).